A 400-amino-acid polypeptide reads, in one-letter code: Phosphoglycerate kinase (400 aa).

Substrate-binding positions include 21–23, Arg-36, 59–62, Arg-118, and Arg-151; these read DFN and HLGR. Residues Lys-201, Gly-293, Glu-324, and 353 to 356 each bind ATP; that span reads GGDS.

It belongs to the phosphoglycerate kinase family. As to quaternary structure, monomer.

It localises to the cytoplasm. It carries out the reaction (2R)-3-phosphoglycerate + ATP = (2R)-3-phospho-glyceroyl phosphate + ADP. Its pathway is carbohydrate degradation; glycolysis; pyruvate from D-glyceraldehyde 3-phosphate: step 2/5. The sequence is that of Phosphoglycerate kinase from Fervidobacterium nodosum (strain ATCC 35602 / DSM 5306 / Rt17-B1).